A 419-amino-acid chain; its full sequence is 3-oxo-isoapionate-4-phosphate decarboxylase (419 aa).

Residues K179, D181, and E182 each coordinate Mg(2+). The residue at position 179 (K179) is an N6-carboxylysine.

It belongs to the RuBisCO large chain family. Mg(2+) is required as a cofactor.

It catalyses the reaction 3-oxoisoapionate 4-phosphate + H(+) = L-erythrulose 1-phosphate + CO2. The protein operates within carbohydrate metabolism. Functionally, involved in catabolism of D-apiose. Catalyzes the decarboxylation of 3-oxo-isoapionate 4-phosphate to L-erythrulose 1-phosphate. In Rhizobium rhizogenes (strain K84 / ATCC BAA-868) (Agrobacterium radiobacter), this protein is 3-oxo-isoapionate-4-phosphate decarboxylase.